Consider the following 204-residue polypeptide: Peptidyl-prolyl cis-trans isomerase CYP20-1 (204 aa).

The signal sequence occupies residues 1-23 (MASSVTLLLWSLLLLGTLSAIQA). One can recognise a PPIase cyclophilin-type domain in the interval 38–201 (YFDVEIDGKA…SKVVIVDSGE (164 aa)).

It belongs to the cyclophilin-type PPIase family. As to quaternary structure, interacts with the PP2A A subunit PP2AA1/RCN1. As to expression, ubiquitous, mostly in aerial organs. Higher levels in leaf and buds, and lower levels in seedlings.

It is found in the endoplasmic reticulum. It localises to the secreted. The enzyme catalyses [protein]-peptidylproline (omega=180) = [protein]-peptidylproline (omega=0). With respect to regulation, binds cyclosporin A (CsA). CsA mediates some of its effects via an inhibitory action on PPIase. Its function is as follows. PPIases accelerate the folding of proteins. It catalyzes the cis-trans isomerization of proline imidic peptide bonds in oligopeptides. Seems to be involved in root development. The polypeptide is Peptidyl-prolyl cis-trans isomerase CYP20-1 (CYP20-1) (Arabidopsis thaliana (Mouse-ear cress)).